The chain runs to 370 residues: Lipoyl synthase, mitochondrial (370 aa).

[4Fe-4S] cluster is bound by residues Cys100, Cys105, Cys111, Cys131, Cys135, Cys138, and Ser346. Residues 116–335 (DKSRATATIM…KEVAEKLGFL (220 aa)) enclose the Radical SAM core domain.

It belongs to the radical SAM superfamily. Lipoyl synthase family. The cofactor is [4Fe-4S] cluster.

The protein localises to the mitochondrion. It catalyses the reaction [[Fe-S] cluster scaffold protein carrying a second [4Fe-4S](2+) cluster] + N(6)-octanoyl-L-lysyl-[protein] + 2 oxidized [2Fe-2S]-[ferredoxin] + 2 S-adenosyl-L-methionine + 4 H(+) = [[Fe-S] cluster scaffold protein] + N(6)-[(R)-dihydrolipoyl]-L-lysyl-[protein] + 4 Fe(3+) + 2 hydrogen sulfide + 2 5'-deoxyadenosine + 2 L-methionine + 2 reduced [2Fe-2S]-[ferredoxin]. It participates in protein modification; protein lipoylation via endogenous pathway; protein N(6)-(lipoyl)lysine from octanoyl-[acyl-carrier-protein]: step 2/2. In terms of biological role, catalyzes the radical-mediated insertion of two sulfur atoms into the C-6 and C-8 positions of the octanoyl moiety bound to the lipoyl domains of lipoate-dependent enzymes, thereby converting the octanoylated domains into lipoylated derivatives. The polypeptide is Lipoyl synthase, mitochondrial (lip5) (Schizosaccharomyces pombe (strain 972 / ATCC 24843) (Fission yeast)).